Consider the following 454-residue polypeptide: Histidine--tRNA ligase (454 aa).

This sequence belongs to the class-II aminoacyl-tRNA synthetase family. Homodimer.

It is found in the cytoplasm. The catalysed reaction is tRNA(His) + L-histidine + ATP = L-histidyl-tRNA(His) + AMP + diphosphate + H(+). This is Histidine--tRNA ligase from Phocaeicola vulgatus (strain ATCC 8482 / DSM 1447 / JCM 5826 / CCUG 4940 / NBRC 14291 / NCTC 11154) (Bacteroides vulgatus).